Reading from the N-terminus, the 513-residue chain is ATP synthase subunit alpha (513 aa).

Position 169–176 (169–176) interacts with ATP; the sequence is GDRQTGKT.

It belongs to the ATPase alpha/beta chains family. F-type ATPases have 2 components, CF(1) - the catalytic core - and CF(0) - the membrane proton channel. CF(1) has five subunits: alpha(3), beta(3), gamma(1), delta(1), epsilon(1). CF(0) has three main subunits: a(1), b(2) and c(9-12). The alpha and beta chains form an alternating ring which encloses part of the gamma chain. CF(1) is attached to CF(0) by a central stalk formed by the gamma and epsilon chains, while a peripheral stalk is formed by the delta and b chains.

Its subcellular location is the cell inner membrane. The catalysed reaction is ATP + H2O + 4 H(+)(in) = ADP + phosphate + 5 H(+)(out). In terms of biological role, produces ATP from ADP in the presence of a proton gradient across the membrane. The alpha chain is a regulatory subunit. The protein is ATP synthase subunit alpha of Haemophilus influenzae (strain PittEE).